Here is a 651-residue protein sequence, read N- to C-terminus: Altered inheritance of mitochondria protein 21 (651 aa).

The disordered stretch occupies residues 1-85; the sequence is MPSEVTPKVP…LQRPVRRSTT (85 aa). Positions 9-19 are enriched in basic and acidic residues; that stretch reads VPERPSRRKTS. Thr-18 is subject to Phosphothreonine. Ser-36 is subject to Phosphoserine. Thr-58 is subject to Phosphothreonine. A Phosphoserine modification is found at Ser-70. Thr-85 bears the Phosphothreonine mark. A Phosphoserine modification is found at Ser-104. Positions 110–119 are enriched in basic residues; it reads NIHNVSRKKS. 2 disordered regions span residues 110-522 and 549-651; these read NIHN…EKIE and IDTT…FHSL. 2 stretches are compositionally biased toward polar residues: residues 133 to 149 and 164 to 178; these read QNGQRSASDNKTSTNPS and SAISPSNLVNKSNNE. The span at 179 to 213 shows a compositional bias: basic and acidic residues; that stretch reads VTEHSDSEDLTEKQKVHAALDNEAGDRSHFEEKLI. 3 positions are modified to phosphoserine: Ser-183, Ser-206, and Ser-231. A compositionally biased stretch (basic and acidic residues) spans 243 to 272; that stretch reads SDDKAEKFTKHPESSLEELQKHQEQQEEKI. A Phosphothreonine modification is found at Thr-277. At Ser-284 the chain carries Phosphoserine. The segment covering 296–323 has biased composition (polar residues); it reads EVNSQPQGPSDTETVIAATSSNVPSQIA. Residue Ser-324 is modified to Phosphoserine. Composition is skewed to basic and acidic residues over residues 339-361 and 372-383; these read KKDFEAHVQKEELPNTQEKRVSE and EESKIPKIPSER. The segment at 383–396 is interaction with SH3 domain of ABP1; the sequence is RPKRRAPPPVPKKP. Polar residues-rich tracts occupy residues 414 to 427 and 437 to 452; these read DLHNNGNSSATTAS and SSITSDTTKADFTSKL. Positions 471–482 are enriched in basic and acidic residues; sequence LEKKLSSPDTES. Residues 501 to 512 are compositionally biased toward basic residues; that stretch reads RRGRGPRGRKLP. A Phosphothreonine modification is found at Thr-552. The span at 556-567 shows a compositional bias: basic and acidic residues; the sequence is QAERALDEKEKL. Over residues 575–586 the composition is skewed to polar residues; sequence PLSQLPQTNTVG. 8 positions are modified to phosphoserine: Ser-592, Ser-595, Ser-597, Ser-599, Ser-639, Ser-643, Ser-647, and Ser-650. Polar residues predominate over residues 594-605; the sequence is ESLSPSEAITNR. A compositionally biased stretch (basic and acidic residues) spans 639–651; sequence SALHSEEASFHSL.

It belongs to the AIM21 family. As to quaternary structure, interacts with ribosomes. Interacts with ABP1.

The protein resides in the cytoplasm. The protein localises to the cytoskeleton. Its subcellular location is the actin patch. Its function is as follows. Involved in mitochondrial migration along actin filaments. This is Altered inheritance of mitochondria protein 21 (AIM21) from Saccharomyces cerevisiae (strain RM11-1a) (Baker's yeast).